Consider the following 258-residue polypeptide: Transmembrane O-methyltransferase homolog (258 aa).

Residues glutamate 104, 106 to 107, serine 112, glutamate 130, and serine 160 contribute to the S-adenosyl-L-methionine site; that span reads GT.

It belongs to the class I-like SAM-binding methyltransferase superfamily. Cation-dependent O-methyltransferase family. As to quaternary structure, interacts with LHFPL5, PCDH15, TMC1, TMC2 and TMIE. Interacts directly with TMC1. The interaction of TOMT with TMC1 and TMC2 is required for the transportation of TMC1/2 into the stereocilia of hair cells.

It localises to the cytoplasm. It is found in the endoplasmic reticulum. The catalysed reaction is a catechol + S-adenosyl-L-methionine = a guaiacol + S-adenosyl-L-homocysteine + H(+). Functionally, catalyzes the O-methylation, and thereby the inactivation, of catecholamine neurotransmitters and catechol hormones. Required for auditory function. Component of the cochlear hair cell's mechanotransduction (MET) machinery. Involved in the assembly of the asymmetric tip-link MET complex. Required for transportation of TMC1 and TMC2 proteins into the mechanically sensitive stereocilia of the hair cells. The function in MET is independent of the enzymatic activity. This Rattus norvegicus (Rat) protein is Transmembrane O-methyltransferase homolog.